We begin with the raw amino-acid sequence, 520 residues long: DDB1- and CUL4-associated factor 17 (520 aa).

Helical transmembrane passes span Val186–Ile206 and Gly222–Ala242.

Interacts with DDB1, CUL4A and CUL4B. Ubiquitously expressed.

The protein localises to the membrane. Its subcellular location is the nucleus. It localises to the nucleolus. It participates in protein modification; protein ubiquitination. In terms of biological role, may function as a substrate receptor for CUL4-DDB1 E3 ubiquitin-protein ligase complex. This chain is DDB1- and CUL4-associated factor 17 (DCAF17), found in Homo sapiens (Human).